Reading from the N-terminus, the 417-residue chain is NADH-quinone oxidoreductase subunit D 2 (417 aa).

It belongs to the complex I 49 kDa subunit family. As to quaternary structure, NDH-1 is composed of 14 different subunits. Subunits NuoB, C, D, E, F, and G constitute the peripheral sector of the complex.

The protein localises to the cell membrane. The enzyme catalyses a quinone + NADH + 5 H(+)(in) = a quinol + NAD(+) + 4 H(+)(out). Functionally, NDH-1 shuttles electrons from NADH, via FMN and iron-sulfur (Fe-S) centers, to quinones in the respiratory chain. The immediate electron acceptor for the enzyme in this species is believed to be ubiquinone. Couples the redox reaction to proton translocation (for every two electrons transferred, four hydrogen ions are translocated across the cytoplasmic membrane), and thus conserves the redox energy in a proton gradient. This Roseiflexus sp. (strain RS-1) protein is NADH-quinone oxidoreductase subunit D 2.